A 762-amino-acid chain; its full sequence is 5-methyltetrahydropteroyltriglutamate--homocysteine methyltransferase (762 aa).

Residues 18-21 (REWK) and Lys112 contribute to the 5-methyltetrahydropteroyltri-L-glutamate site. L-homocysteine-binding positions include 435 to 437 (IGS) and Glu488. Residues 435-437 (IGS) and Glu488 contribute to the L-methionine site. Residues 519-520 (RC) and Trp565 each bind 5-methyltetrahydropteroyltri-L-glutamate. Asp603 lines the L-homocysteine pocket. Asp603 provides a ligand contact to L-methionine. Glu609 serves as a coordination point for 5-methyltetrahydropteroyltri-L-glutamate. Residues His645, Cys647, and Glu669 each coordinate Zn(2+). His698 (proton donor) is an active-site residue. Cys730 contacts Zn(2+).

The protein belongs to the vitamin-B12 independent methionine synthase family. Requires Zn(2+) as cofactor.

The catalysed reaction is 5-methyltetrahydropteroyltri-L-glutamate + L-homocysteine = tetrahydropteroyltri-L-glutamate + L-methionine. It functions in the pathway amino-acid biosynthesis; L-methionine biosynthesis via de novo pathway; L-methionine from L-homocysteine (MetE route): step 1/1. Its function is as follows. Catalyzes the transfer of a methyl group from 5-methyltetrahydrofolate to homocysteine resulting in methionine formation. This Bacillus velezensis (strain DSM 23117 / BGSC 10A6 / LMG 26770 / FZB42) (Bacillus amyloliquefaciens subsp. plantarum) protein is 5-methyltetrahydropteroyltriglutamate--homocysteine methyltransferase.